A 462-amino-acid chain; its full sequence is Tubby-like F-box protein 7 (462 aa).

Positions 54 to 109 (SKWAGLPPELLRDVMKRLEEDDSNWPSRKDVVACASVCTTWRDMCKDIVRNPEFCG) constitute an F-box domain. 2 disordered regions span residues 317 to 338 (FSEF…DDVN) and 383 to 418 (QPSS…SSSN). Positions 383–417 (QPSSGAASEPSQAGQAAQQQTQPSQPSSSSSSSSS) are enriched in low complexity.

This sequence belongs to the TUB family. In terms of tissue distribution, ubiquitous.

This Oryza sativa subsp. japonica (Rice) protein is Tubby-like F-box protein 7 (TULP7).